The sequence spans 430 residues: Dihydroorotase (430 aa).

Residues His-61 and His-63 each coordinate Zn(2+). Substrate contacts are provided by residues 63 to 65 (HLR) and Asn-95. 3 residues coordinate Zn(2+): Asp-153, His-180, and His-233. Residue Asn-279 coordinates substrate. Asp-306 contacts Zn(2+). Asp-306 is an active-site residue. Substrate-binding positions include His-310 and 324–325 (FG).

The protein belongs to the metallo-dependent hydrolases superfamily. DHOase family. Class I DHOase subfamily. Zn(2+) serves as cofactor.

It catalyses the reaction (S)-dihydroorotate + H2O = N-carbamoyl-L-aspartate + H(+). Its pathway is pyrimidine metabolism; UMP biosynthesis via de novo pathway; (S)-dihydroorotate from bicarbonate: step 3/3. Its function is as follows. Catalyzes the reversible cyclization of carbamoyl aspartate to dihydroorotate. This is Dihydroorotase from Lactiplantibacillus plantarum (strain ATCC BAA-793 / NCIMB 8826 / WCFS1) (Lactobacillus plantarum).